The following is a 296-amino-acid chain: GTP cyclohydrolase FolE2 (296 aa).

Belongs to the GTP cyclohydrolase IV family.

It carries out the reaction GTP + H2O = 7,8-dihydroneopterin 3'-triphosphate + formate + H(+). It participates in cofactor biosynthesis; 7,8-dihydroneopterin triphosphate biosynthesis; 7,8-dihydroneopterin triphosphate from GTP: step 1/1. Converts GTP to 7,8-dihydroneopterin triphosphate. This Ectopseudomonas mendocina (strain ymp) (Pseudomonas mendocina) protein is GTP cyclohydrolase FolE2.